We begin with the raw amino-acid sequence, 674 residues long: ATP-dependent DNA helicase Hel308 (674 aa).

ATP is bound by residues Gln-27 and 44–51 (VPTAAGKT). The 167-residue stretch at 31 to 197 (IEQFRKGKNI…WLNASLIKSS (167 aa)) folds into the Helicase ATP-binding domain. Positions 142–145 (DEIH) match the DEAH box motif. Positions 224–411 (DINLLVKETV…PEKVRFNTLA (188 aa)) constitute a Helicase C-terminal domain.

Belongs to the helicase family. Hel308 subfamily. Monomer.

The enzyme catalyses Couples ATP hydrolysis with the unwinding of duplex DNA by translocating in the 3'-5' direction.. The catalysed reaction is ATP + H2O = ADP + phosphate + H(+). DNA-dependent ATPase and 3'-5' DNA helicase that may be involved in repair of stalled replication forks. In Thermoplasma volcanium (strain ATCC 51530 / DSM 4299 / JCM 9571 / NBRC 15438 / GSS1), this protein is ATP-dependent DNA helicase Hel308.